The sequence spans 504 residues: Ribonuclease Y (504 aa).

Residues 2–22 (TTSIVIGVVLVTVGLTFGWTI) traverse the membrane as a helical segment. In terms of domain architecture, KH spans 194–279 (TVSTVNLPSE…EIVQKVTQEV (86 aa)). An HD domain is found at 320 to 413 (VLYHSKEVAL…VQVADAISAA (94 aa)).

Belongs to the RNase Y family.

The protein resides in the cell membrane. Functionally, endoribonuclease that initiates mRNA decay. The polypeptide is Ribonuclease Y (Treponema pallidum (strain Nichols)).